Consider the following 1079-residue polypeptide: Electrogenic sodium bicarbonate cotransporter 1 (1079 aa).

Positions 1–62 (MEDEAVLDRG…EKREKERISE (62 aa)) are required for interaction with AHCYL1. Topologically, residues 1–466 (MEDEAVLDRG…FASDFYDALN (466 aa)) are cytoplasmic. Tyrosine 30 carries the phosphotyrosine modification. The segment covering 39 to 52 (YRRRRRHKRKTGHK) has biased composition (basic residues). The disordered stretch occupies residues 39–78 (YRRRRRHKRKTGHKEKREKERISENYSDKSDVENADESSS). Threonine 49 bears the Phosphothreonine; by PKA mark. Basic and acidic residues predominate over residues 53–70 (EKREKERISENYSDKSDV). Residues serine 61, serine 65, serine 68, serine 223, serine 232, serine 233, and serine 245 each carry the phosphoserine modification. Residues 237–265 (MFTSPDNGSPAMTHRNLTSSSLNDISDKP) form a disordered region. Phosphothreonine is present on residues threonine 249 and threonine 254. Positions 251–260 (RNLTSSSLND) are enriched in polar residues. 3 positions are modified to phosphoserine: serine 256, serine 257, and serine 262. Residues 467 to 491 (IQSLSAILFIYLATVTNAITFGGLL) form a helical membrane-spanning segment. Residues 492-501 (GDATDNMQGV) are Extracellular-facing. A helical membrane pass occupies residues 502–520 (LESFLGTAVSGAIFCLFAG). Position 521 (glutamine 521) is a topological domain, cytoplasmic. Residues 522-542 (PLTILSSTGPVLVFERLLFNF) form a discontinuously helical membrane-spanning segment. Over 543–550 (SKDHNFDY) the chain is Extracellular. A helical transmembrane segment spans residues 551-571 (LEFRLWIGLWSAFLCLILVAT). Topologically, residues 572 to 585 (DASFLVQYFTRFTE) are cytoplasmic. A helical transmembrane segment spans residues 586–609 (EGFSSLISFIFIYDAFKKMIKLAD). Over 610-692 (YYPINSDFKV…GNNCNFVPDV (83 aa)) the chain is Extracellular. The helical transmembrane segment at 693-710 (TLMSFILFLGTYTSSMAL) threads the bilayer. Residues 711–725 (KKFKTSRYFPTTARK) lie on the Cytoplasmic side of the membrane. The chain crosses the membrane as a helical span at residues 726–745 (LISDFAIILSILIFCVIDAL). Residues 746–779 (VGVDTPKLIVPSEFKPTSPNRGWFVPPFGGNPWW) lie on the Extracellular side of the membrane. Residues 748 to 779 (VDTPKLIVPSEFKPTSPNRGWFVPPFGGNPWW) form an interaction with CA4 region. A helical transmembrane segment spans residues 780–807 (VYLAAAIPALLVTILIFMDQQITAVIVN). At 808–819 (RKEHKLKKGAGY) the chain is on the cytoplasmic side. The helical transmembrane segment at 820 to 836 (HLDLFWVAILMVVCSFM) threads the bilayer. Residue alanine 837 is a topological domain, extracellular. A discontinuously helical transmembrane segment spans residues 838–855 (LPWYVAATVISIAHIDSL). At 856-877 (KMETETSAPGEQPKFLGVREQR) the chain is on the cytoplasmic side. The chain crosses the membrane as a helical span at residues 878-894 (VTGTLVFILTGLSVFMA). Residues 895-901 (PILKFIP) lie on the Extracellular side of the membrane. A helical transmembrane segment spans residues 902–918 (MPVLYGVFLYMGVASLN). Over 919 to 960 (GVQFMDRLKLLLMPLKHQPDFIYLRHVPLRRVHLFTFLQVLC) the chain is Cytoplasmic. The segment at residues 961-986 (LALLWILKSTVAAIIFPVMILALVAV) is an intramembrane region (discontinuously helical). The Cytoplasmic portion of the chain corresponds to 987-1079 (RKGMDYLFSQ…STFLERHTSC (93 aa)). A CA2-binding region spans residues 1002-1004 (LDD). A disordered region spans residues 1012–1079 (KKKEDEKKKK…STFLERHTSC (68 aa)). The residue at position 1026 (serine 1026) is a Phosphoserine; by PKA. A Phosphoserine modification is found at serine 1029. The interval 1030 to 1033 (DNDD) is CA2-binding. Residues serine 1034 and serine 1044 each carry the phosphoserine modification. The tract at residues 1057 to 1059 (FLS) is required for basolateral targeting. Over residues 1062-1079 (KPSDREKSSTFLERHTSC) the composition is skewed to basic and acidic residues. Serine 1069 is subject to Phosphoserine.

This sequence belongs to the anion exchanger (TC 2.A.31) family. In terms of assembly, homodimer. Interacts with CA2/carbonic anhydrase 2 and CA4/carbonic anhydrase 4 which may regulate transporter activity. Isoform 1 but not isoform 2 interacts with AHCYL1 (via PEST domain when phosphorylated); the interaction increases SLC4A4 isoform 1 activity. Interacts with AHCYL2. Phosphorylation of Ser-1026 by PKA increases the binding of CA2 and changes the Na(+):HCO3(-) stoichiometry of the transporter from 3:1 to 2:1. Phosphorylated in presence of STK39 and dephosphorylated in presence of PP1 phosphatase; phosphorylation seems to inhibit SLC4A4 activity. Post-translationally, N-glycosylated. May not be necessary for the transporter basic functions. Expressed in colonic mucosa, kidney cortex and to gastric mucosa.

The protein resides in the basolateral cell membrane. It is found in the cell membrane. It carries out the reaction 2 hydrogencarbonate(out) + Na(+)(out) = 2 hydrogencarbonate(in) + Na(+)(in). The catalysed reaction is 3 hydrogencarbonate(out) + Na(+)(out) = 3 hydrogencarbonate(in) + Na(+)(in). Functionally, electrogenic sodium/bicarbonate cotransporter with a Na(+):HCO3(-) stoichiometry varying from 1:2 to 1:3. May regulate bicarbonate influx/efflux at the basolateral membrane of cells and regulate intracellular pH. The sequence is that of Electrogenic sodium bicarbonate cotransporter 1 (SLC4A4) from Oryctolagus cuniculus (Rabbit).